A 139-amino-acid polypeptide reads, in one-letter code: MSISGVVKLGKPSKKAIFSMTDSALKRVKEIMNDKKIDNCIGLRLGIKERGCSGMSYTLDFATQKNKFDETVVADKDINIIVDSKALLSVIGTEMDYIEEPIKKEFIFINPNATNTCGCGESFTTKDFSIPDLKLPKKN.

Residues Cys-52, Cys-117, and Cys-119 each coordinate Fe cation.

This sequence belongs to the HesB/IscA family.

It is found in the mitochondrion. In terms of biological role, involved in the assembly of mitochondrial iron-sulfur proteins. Probably involved in the binding of an intermediate of Fe/S cluster assembly. This Dictyostelium discoideum (Social amoeba) protein is Iron-sulfur cluster assembly 1 homolog, mitochondrial (isca1).